The primary structure comprises 719 residues: 2'-5'-oligoadenylate synthase 2 (719 aa).

A lipid anchor (N-myristoyl glycine) is attached at G2. OAS domain stretches follow at residues 11–335 and 343–683; these read VPAQ…SWNV and TPGH…WKVP. At K378 the chain carries N6-acetyllysine. S396 provides a ligand contact to ATP. D408, D410, and D481 together coordinate Mg(2+). ATP contacts are provided by R544 and K547.

This sequence belongs to the 2-5A synthase family. Homodimer. Mg(2+) serves as cofactor. Myristoylation is not essential for its activity. In terms of processing, glycosylated. Glycosylation is essential for its activity.

Its subcellular location is the cytoplasm. The protein localises to the perinuclear region. It catalyses the reaction 3 ATP = 5'-triphosphoadenylyl-(2'-&gt;5')-adenylyl-(2'-&gt;5')-adenosine + 2 diphosphate. With respect to regulation, produced as a latent enzyme which is activated by double stranded RNA (dsRNA) generated during the course of viral infection. The dsRNA activator must be at least 15 nucleotides long, and no modification of the 2'-hydroxyl group is tolerated. ssRNA or dsDNA do not act as activators. Strongly inhibited by copper, iron and zinc ions. Partially inhibited by cobalt and nickel ions. Interferon-induced, dsRNA-activated antiviral enzyme which plays a critical role in cellular innate antiviral response. Activated by detection of double stranded RNA (dsRNA): polymerizes higher oligomers of 2'-5'-oligoadenylates (2-5A) from ATP which then bind to the inactive monomeric form of ribonuclease L (RNASEL) leading to its dimerization and subsequent activation. Activation of RNASEL leads to degradation of cellular as well as viral RNA, resulting in the inhibition of protein synthesis, thus terminating viral replication. Can mediate the antiviral effect via the classical RNASEL-dependent pathway or an alternative antiviral pathway independent of RNASEL. In addition, it may also play a role in other cellular processes such as apoptosis, cell growth, differentiation and gene regulation. May act as a negative regulator of lactation, stopping lactation in virally infected mammary gland lobules, thereby preventing transmission of viruses to neonates. Non-infected lobules would not be affected, allowing efficient pup feeding during infection. The protein is 2'-5'-oligoadenylate synthase 2 of Homo sapiens (Human).